The primary structure comprises 293 residues: Proline iminopeptidase (293 aa).

Positions 28–277 (KPLVLLHGGP…YSRHMPFVEE (250 aa)) constitute an AB hydrolase-1 domain. The active-site Nucleophile is the serine 104. Residue aspartate 244 is part of the active site. Histidine 271 functions as the Proton donor in the catalytic mechanism.

It belongs to the peptidase S33 family.

It carries out the reaction Release of N-terminal proline from a peptide.. Its function is as follows. Releases the N-terminal proline from various substrates. This chain is Proline iminopeptidase, found in Clostridioides difficile (strain 630) (Peptoclostridium difficile).